The sequence spans 61 residues: Large ribosomal subunit protein bL32 (61 aa).

The span at 1–16 (MAVPKRKTSPSKRGMR) shows a compositional bias: basic residues. Residues 1 to 33 (MAVPKRKTSPSKRGMRRSADGLKAPTYVEDKNS) are disordered.

This sequence belongs to the bacterial ribosomal protein bL32 family.

The polypeptide is Large ribosomal subunit protein bL32 (Allorhizobium ampelinum (strain ATCC BAA-846 / DSM 112012 / S4) (Agrobacterium vitis (strain S4))).